The following is a 384-amino-acid chain: MTESTFAVETFSMDSMSPSPGAEIPRLTVSPADTTLKFEDLVPEGLPKVDTPKPAEKKPVKKRKSWGQELPTPKTNLPPRKRAKTEDEKEQRRIERVLRNRAAAQISRERKRLEIEKLEGEKLKIEQQNEFLLRRLSQMEAENNRLSQQVAKLASEIQTSKSNPGSPASASASASTSSISATLAPSTSPTLAPVLFKQENDLLDNIDSIPFTINPDPSTTTTTTTTTTTSNNISSTSSTTLSPADLDHSSATPSDLAQHPAAVFHLNIPLLREHDHVHPPPLSDADLSRLFDADSSSEPDLSFLEDGFSLELLPDSDLGPFAFDSLVDLGPDEDNQQQQQQLQQKLDDSIGFPEQTPLPASGLQPSFGASLERCDEQGIAAGAQ.

Polar residues predominate over residues 1–18 (MTESTFAVETFSMDSMSP). Disordered regions lie at residues 1–27 (MTESTFAVETFSMDSMSPSPGAEIPRL) and 41–94 (LVPE…QRRI). Basic and acidic residues predominate over residues 84-94 (KTEDEKEQRRI). Residues 90–153 (EQRRIERVLR…NRLSQQVAKL (64 aa)) enclose the bZIP domain. The segment at 92–101 (RRIERVLRNR) is basic motif. Positions 106–113 (ISRERKRL) are leucine-zipper. Disordered regions lie at residues 208–256 (SIPF…PSDL) and 331–384 (PDED…AGAQ). The segment covering 218 to 240 (STTTTTTTTTTTSNNISSTSSTT) has biased composition (low complexity).

The protein belongs to the bZIP family.

It localises to the nucleus. Master transcriptional regulator of the unfolded protein response (UPR) that recognizes and binds to the UPR element (UPRE) in the promoter of UPR-regulated genes. Exposure to antifungals and ER-stressing agents initiates the activation of hacA which occurs when a 20 nucleotide fragment is removed from part of the exon-2 and part of intron-2, which in turn promotes the arisen of the DNA binding site motif and a dimer interface domain. Modulates the expression of genes related to cell wall synthesis, ergosterol biosynthesis, pigmentation, heat shock proteins, and the genes coding for mannosyltransferase enzymes. Plays a key role in both response to stress and host-pathogen interaction. The chain is Transcriptional regulator of the unfolded protein response hacA from Trichophyton rubrum (strain ATCC MYA-4607 / CBS 118892) (Athlete's foot fungus).